Here is a 341-residue protein sequence, read N- to C-terminus: UDP-3-O-acylglucosamine N-acyltransferase (341 aa).

The active-site Proton acceptor is the histidine 241.

It belongs to the transferase hexapeptide repeat family. LpxD subfamily. As to quaternary structure, homotrimer.

The catalysed reaction is a UDP-3-O-[(3R)-3-hydroxyacyl]-alpha-D-glucosamine + a (3R)-hydroxyacyl-[ACP] = a UDP-2-N,3-O-bis[(3R)-3-hydroxyacyl]-alpha-D-glucosamine + holo-[ACP] + H(+). It functions in the pathway bacterial outer membrane biogenesis; LPS lipid A biosynthesis. Functionally, catalyzes the N-acylation of UDP-3-O-acylglucosamine using 3-hydroxyacyl-ACP as the acyl donor. Is involved in the biosynthesis of lipid A, a phosphorylated glycolipid that anchors the lipopolysaccharide to the outer membrane of the cell. In Mannheimia succiniciproducens (strain KCTC 0769BP / MBEL55E), this protein is UDP-3-O-acylglucosamine N-acyltransferase.